The primary structure comprises 723 residues: Methionine--tRNA ligase (723 aa).

The 'HIGH' region signature appears at 11-21 (PYANGPIHAGH). 4 residues coordinate Zn(2+): Cys-143, Cys-146, Cys-156, and Cys-159. The 'KMSKS' region signature appears at 344 to 348 (KFSTS). Residue Thr-347 participates in ATP binding. Residues 623 to 723 (DFAKLDLRVG…KEVKLGAKVR (101 aa)) form the tRNA-binding domain.

Belongs to the class-I aminoacyl-tRNA synthetase family. MetG type 1 subfamily. In terms of assembly, homodimer. It depends on Zn(2+) as a cofactor.

Its subcellular location is the cytoplasm. The enzyme catalyses tRNA(Met) + L-methionine + ATP = L-methionyl-tRNA(Met) + AMP + diphosphate. Is required not only for elongation of protein synthesis but also for the initiation of all mRNA translation through initiator tRNA(fMet) aminoacylation. The protein is Methionine--tRNA ligase of Pyrococcus horikoshii (strain ATCC 700860 / DSM 12428 / JCM 9974 / NBRC 100139 / OT-3).